Reading from the N-terminus, the 171-residue chain is MIGILNRWRQFGRRYFWPHLLLGMVAASLGLPTSLNESQDIVSHPNSASSVSRQNSVSLSLTDLVALKEAHRRSSYSVDYWHQHAIRTVIRHLSFALTTPQTANAQQVDELQPHSLVLLDTLNALLTQDSQFPFVISPHAGRVTFYPQAHHQIGIWLAQIRGIRAGPYLLS.

The first 30 residues, 1 to 30, serve as a signal peptide directing secretion; that stretch reads MIGILNRWRQFGRRYFWPHLLLGMVAASLG.

It belongs to the SecM family.

Its subcellular location is the cytoplasm. The protein localises to the cytosol. The protein resides in the periplasm. In terms of biological role, regulates secA expression by translational coupling of the secM secA operon. Translational pausing at a specific Pro residue 5 residues before the end of the protein may allow disruption of a mRNA repressor helix that normally suppresses secA translation initiation. In Pectobacterium atrosepticum (strain SCRI 1043 / ATCC BAA-672) (Erwinia carotovora subsp. atroseptica), this protein is Secretion monitor.